The sequence spans 203 residues: Recombination protein RecR (203 aa).

The C4-type zinc finger occupies 56–71; the sequence is CAVCGNVSDNERCRIC. Positions 79 to 179 constitute a Toprim domain; that stretch reads SVVCIVEEPK…TVTRIASGLP (101 aa).

Belongs to the RecR family.

May play a role in DNA repair. It seems to be involved in an RecBC-independent recombinational process of DNA repair. It may act with RecF and RecO. The polypeptide is Recombination protein RecR (Mycobacterium bovis (strain ATCC BAA-935 / AF2122/97)).